The following is a 399-amino-acid chain: Glucosamine kinase (399 aa).

ATP-binding positions include lysine 98, 149-151 (EYL), and aspartate 156. Residue aspartate 262 coordinates D-glucosamine. Mg(2+) is bound by residues glutamine 267, aspartate 279, and aspartate 281. Positions 366 to 381 (QVLREIIYAARHLPRW) match the Substrate specificity determinant motif motif. Glutamate 370 contributes to the D-glucosamine binding site.

The protein belongs to the actinobacterial glucosamine kinase family. Monomer. Mg(2+) serves as cofactor.

The catalysed reaction is D-glucosamine + ATP = D-glucosamine 6-phosphate + ADP + H(+). In terms of biological role, catalyzes the ATP-dependent phosphorylation of D-glucosamine (GlcN) to D-glucosamine 6-phosphate. May be involved in the phosphorylation of acquired extracellular GlcN derived from the hydrolysis of chitosan, i.e., in the incorporation of exogenous GlcN into the bacterial GlcNAc metabolism. Is unable to phosphorylate maltose. This is Glucosamine kinase from Mycolicibacterium smegmatis (strain ATCC 700084 / mc(2)155) (Mycobacterium smegmatis).